Reading from the N-terminus, the 1395-residue chain is DNA polymerase II large subunit (1395 aa).

2 disordered regions span residues 279-320 and 657-704; these read IGKD…PRVE and GNRM…MSDT. Residues 283–312 are compositionally biased toward acidic residues; that stretch reads EADEGDSAEDANGDDAGEGADDDGGDEADE. 2 stretches are compositionally biased toward basic and acidic residues: residues 661-671 and 690-700; these read GRPEKSERRDL and DVAKATKHADD.

This sequence belongs to the archaeal DNA polymerase II family. As to quaternary structure, heterodimer of a large subunit and a small subunit. Post-translationally, this protein undergoes a protein self splicing that involves a post-translational excision of the intervening region (intein) followed by peptide ligation.

It carries out the reaction DNA(n) + a 2'-deoxyribonucleoside 5'-triphosphate = DNA(n+1) + diphosphate. The catalysed reaction is Exonucleolytic cleavage in the 3'- to 5'-direction to yield nucleoside 5'-phosphates.. In terms of biological role, possesses two activities: a DNA synthesis (polymerase) and an exonucleolytic activity that degrades single-stranded DNA in the 3'- to 5'-direction. Has a template-primer preference which is characteristic of a replicative DNA polymerase. This chain is DNA polymerase II large subunit, found in Haloarcula marismortui (strain ATCC 43049 / DSM 3752 / JCM 8966 / VKM B-1809) (Halobacterium marismortui).